Consider the following 958-residue polypeptide: Glycine dehydrogenase (decarboxylating) (958 aa).

Lys703 bears the N6-(pyridoxal phosphate)lysine mark.

This sequence belongs to the GcvP family. In terms of assembly, the glycine cleavage system is composed of four proteins: P, T, L and H. Pyridoxal 5'-phosphate serves as cofactor.

It carries out the reaction N(6)-[(R)-lipoyl]-L-lysyl-[glycine-cleavage complex H protein] + glycine + H(+) = N(6)-[(R)-S(8)-aminomethyldihydrolipoyl]-L-lysyl-[glycine-cleavage complex H protein] + CO2. In terms of biological role, the glycine cleavage system catalyzes the degradation of glycine. The P protein binds the alpha-amino group of glycine through its pyridoxal phosphate cofactor; CO(2) is released and the remaining methylamine moiety is then transferred to the lipoamide cofactor of the H protein. In Nitrobacter hamburgensis (strain DSM 10229 / NCIMB 13809 / X14), this protein is Glycine dehydrogenase (decarboxylating).